Consider the following 245-residue polypeptide: Nodulation protein G (245 aa).

11–35 (VTGASGAIGGAIARVLHAQGAIVGL) is a binding site for NAD(+). Serine 139 contacts substrate. Tyrosine 152 (proton acceptor) is an active-site residue.

This sequence belongs to the short-chain dehydrogenases/reductases (SDR) family.

In terms of biological role, proposed to modify Nod factor fatty acyl chain. The polypeptide is Nodulation protein G (nodG) (Rhizobium meliloti (strain 1021) (Ensifer meliloti)).